We begin with the raw amino-acid sequence, 74 residues long: DNA-directed RNA polymerase subunit omega (74 aa).

The protein belongs to the RNA polymerase subunit omega family. The RNAP catalytic core consists of 2 alpha, 1 beta, 1 beta' and 1 omega subunit. When a sigma factor is associated with the core the holoenzyme is formed, which can initiate transcription.

The enzyme catalyses RNA(n) + a ribonucleoside 5'-triphosphate = RNA(n+1) + diphosphate. Its function is as follows. Promotes RNA polymerase assembly. Latches the N- and C-terminal regions of the beta' subunit thereby facilitating its interaction with the beta and alpha subunits. The sequence is that of DNA-directed RNA polymerase subunit omega from Marinomonas sp. (strain MWYL1).